The chain runs to 373 residues: Transcription factor NF-E2 45 kDa subunit (373 aa).

2 disordered regions span residues 1 to 22 and 40 to 60; these read MPPCPPQPNRNRLPQLPTGELG and LNVPSEPSFEPQAPTPYPGPL. Positions 1–83 are required for interaction with MAPK8; that stretch reads MPPCPPQPNR…AGFTLPPPPY (83 aa). The tract at residues 1-206 is transactivation domain; the sequence is MPPCPPQPNR…PPTETPLVLE (206 aa). 2 consecutive short sequence motifs (PXY motif) follow at residues 61–65 and 79–83; these read PPPTY and PPPPY. The interval 131–163 is disordered; sequence LPVGQPKPQEDPESDSGLSLNYSDAESLELEGT. Serine 157 is subject to Phosphoserine; by MAPK8. A Phosphoserine; by PKA modification is found at serine 170. A disordered region spans residues 206–225; sequence ESSSGPVRAKPAVRGEAGSR. The 64-residue stretch at 266–329 folds into the bZIP domain; sequence LVRDIRRRGK…EVMRQQLTEL (64 aa). The basic motif stretch occupies residues 268–287; sequence RDIRRRGKNKVAAQNCRKRK. A leucine-zipper region spans residues 291-298; the sequence is IVQLEREL. Lysine 368 participates in a covalent cross-link: Glycyl lysine isopeptide (Lys-Gly) (interchain with G-Cter in SUMO); alternate. Lysine 368 participates in a covalent cross-link: Glycyl lysine isopeptide (Lys-Gly) (interchain with G-Cter in SUMO1); alternate.

This sequence belongs to the bZIP family. CNC subfamily. As to quaternary structure, homodimer; can bind DNA as a homodimer. Erythroid transcription activator nuclear factor erythroid-derived 2 (NF-E2), composed of a heterodimer of NFE2 and MAFK, possesses transactivation activity on beta-globin. Also forms high affinity heterodimer with MAFG; the interaction promotes erythropoiesis. Interacts (via the PXY motif 1) with ITCH (via the WW 1 domain); the interaction promotes 'Lys63'-linked ubiquitination of NFE2, translocates it to the cytoplasm and inhibits its transactivation activity. Interacts with KMT2D/MLL2; the interaction promotes transactivation of the beta-globin locus. Interacts with MAPK8 (phosphorylated form); the interaction leads to phosphorylation of NFE2 in undifferentiated cells. Phosphorylated on serine residues. In undifferentiated erythrocytes, phosphorylated by MAPK8 which then leads to ubiquitination and protein degradation. Post-translationally, sumoylated. Sumoylation is required for translocation to nuclear bodies PODs, anchoring to the gene loci, and transactivation of the beta-globin gene. In terms of processing, ubiquitinated mainly by 'Lys63'-linked ubiquitin. Polyubiquitination with 'Lys63'-linked ubiquitin by ITCH retains NFE2 in the cytoplasm preventing its transactivation activity. In undifferentiated erythrocyte, ubiquitinated after MAPK8-mediatd phosphorylation leading to protein degradation.

Its subcellular location is the nucleus. The protein resides in the PML body. It is found in the cytoplasm. Component of the NF-E2 complex essential for regulating erythroid and megakaryocytic maturation and differentiation. Binds to the hypersensitive site 2 (HS2) of the beta-globin control region (LCR). This subunit (NFE2) recognizes the TCAT/C sequence of the AP-1-like core palindrome present in a number of erythroid and megakaryocytic gene promoters. Requires MAFK or other small MAF proteins for binding to the NF-E2 motif. May play a role in all aspects of hemoglobin production from globin and heme synthesis to procurement of iron. The sequence is that of Transcription factor NF-E2 45 kDa subunit (Nfe2) from Rattus norvegicus (Rat).